The sequence spans 141 residues: uncharacterized protein (141 aa).

Positions 24–52 form a coiled coil; sequence KVQTALQKEAKTIKREQKKIKDEIDTFKT.

This is an uncharacterized protein from Invertebrate iridescent virus 6 (IIV-6).